Here is a 269-residue protein sequence, read N- to C-terminus: Undecaprenyl-diphosphatase (269 aa).

A run of 8 helical transmembrane segments spans residues 1 to 21 (MDIMHAAVLGILQGLTEILPI), 40 to 59 (GLTFDVGLHVGTLIALCVYF), 87 to 107 (FFIIAGTVPAAIAGKTLEKPI), 117 to 137 (LIALLLIAFGLLLALADTTGP), 147 to 166 (LRGALLIGLAQCLALIPGVS), 188 to 208 (FSFLLSLPIVAGAGILKMGEL), 220 to 240 (PLLAGMATSAVSGYLGVALLL), and 248 to 268 (LYPFVWYRLLAGGAVLAYLFA).

This sequence belongs to the UppP family.

It localises to the cell inner membrane. It carries out the reaction di-trans,octa-cis-undecaprenyl diphosphate + H2O = di-trans,octa-cis-undecaprenyl phosphate + phosphate + H(+). In terms of biological role, catalyzes the dephosphorylation of undecaprenyl diphosphate (UPP). Confers resistance to bacitracin. The sequence is that of Undecaprenyl-diphosphatase from Geobacter sulfurreducens (strain ATCC 51573 / DSM 12127 / PCA).